The sequence spans 255 residues: F-box only protein 44 (255 aa).

Residues 3 to 50 (VGNINELPENILLELFTHVPARQLLLNCRLVCSLWRDLIDLVTLWKRK) form the F-box domain. In terms of domain architecture, FBA spans 71–252 (FYFLRSLHRN…VTNSSITIGP (182 aa)).

Part of a SCF (SKP1-cullin-F-box) protein ligase complex. Interacts with SKP1 and CUL1. In terms of tissue distribution, abundantly expressed in brain and kidney. Expressed at lower levels in heart, spleen and liver.

In terms of biological role, substrate-recognition component of the SCF (SKP1-CUL1-F-box protein)-type E3 ubiquitin ligase complex. The sequence is that of F-box only protein 44 (FBXO44) from Homo sapiens (Human).